Here is a 99-residue protein sequence, read N- to C-terminus: Aspartyl/glutamyl-tRNA(Asn/Gln) amidotransferase subunit C (99 aa).

The protein belongs to the GatC family. In terms of assembly, heterotrimer of A, B and C subunits.

The enzyme catalyses L-glutamyl-tRNA(Gln) + L-glutamine + ATP + H2O = L-glutaminyl-tRNA(Gln) + L-glutamate + ADP + phosphate + H(+). The catalysed reaction is L-aspartyl-tRNA(Asn) + L-glutamine + ATP + H2O = L-asparaginyl-tRNA(Asn) + L-glutamate + ADP + phosphate + 2 H(+). Its function is as follows. Allows the formation of correctly charged Asn-tRNA(Asn) or Gln-tRNA(Gln) through the transamidation of misacylated Asp-tRNA(Asn) or Glu-tRNA(Gln) in organisms which lack either or both of asparaginyl-tRNA or glutaminyl-tRNA synthetases. The reaction takes place in the presence of glutamine and ATP through an activated phospho-Asp-tRNA(Asn) or phospho-Glu-tRNA(Gln). This is Aspartyl/glutamyl-tRNA(Asn/Gln) amidotransferase subunit C from Paraburkholderia phymatum (strain DSM 17167 / CIP 108236 / LMG 21445 / STM815) (Burkholderia phymatum).